Consider the following 246-residue polypeptide: Acetoacetate decarboxylase (246 aa).

The active-site Schiff-base intermediate with acetoacetate is the Lys-116.

Belongs to the ADC family.

The catalysed reaction is acetoacetate + H(+) = acetone + CO2. In terms of biological role, catalyzes the conversion of acetoacetate to acetone and carbon dioxide. In Burkholderia vietnamiensis (strain G4 / LMG 22486) (Burkholderia cepacia (strain R1808)), this protein is Acetoacetate decarboxylase.